Reading from the N-terminus, the 71-residue chain is Large ribosomal subunit protein bL28 (71 aa).

This sequence belongs to the bacterial ribosomal protein bL28 family.

The sequence is that of Large ribosomal subunit protein bL28 from Finegoldia magna (strain ATCC 29328 / DSM 20472 / WAL 2508) (Peptostreptococcus magnus).